Here is a 490-residue protein sequence, read N- to C-terminus: Keratin, type II cytoskeletal 8 (490 aa).

The span at 1-27 (MSIRVTQKSYKMSTSGPRAFSSRSFTS) shows a compositional bias: polar residues. Residues 1–48 (MSIRVTQKSYKMSTSGPRAFSSRSFTSGPGARISSSSFSRVGSSSSSF) form a disordered region. The interval 1–96 (MSIRVTQKSY…DPNIQAVRTQ (96 aa)) is head. S9 is subject to Phosphoserine; by PKC/PRKCE. K11 participates in a covalent cross-link: Glycyl lysine isopeptide (Lys-Gly) (interchain with G-Cter in SUMO2). S13, S15, S21, and S22 each carry phosphoserine. R23 carries the omega-N-methylarginine modification. S24 is subject to Phosphoserine; by PKC/PRKCE. Residue T26 is modified to Phosphothreonine. S27 carries the post-translational modification Phosphoserine. R32 is subject to Omega-N-methylarginine. Residues S34, S37, and S39 each carry the phosphoserine modification. The segment covering 34–48 (SSSSFSRVGSSSSSF) has biased composition (low complexity). Position 40 is an omega-N-methylarginine (R40). Phosphoserine occurs at positions 43, 44, and 47. Residue R49 is modified to Asymmetric dimethylarginine; alternate. R49 carries the post-translational modification Omega-N-methylarginine; alternate. A Phosphoserine modification is found at S51. S80 carries the phosphoserine; by MAPK modification. A coil 1A region spans residues 97–132 (EKEQIKSLNNKFASFIDKVRFLEQQNKMLETKWSLL). Residues 97-408 (EKEQIKSLNN…KLLEGEESRL (312 aa)) form the IF rod domain. At K107 the chain carries N6-malonyllysine. Glycyl lysine isopeptide (Lys-Gly) (interchain with G-Cter in SUMO2) cross-links involve residues K128 and K136. Residues 133 to 149 (QQQKTSRSNMDNMFESY) form a linker 1 region. Positions 150 to 241 (INNLRRQLEA…QIHEEEIREL (92 aa)) are coil 1B. A Glycyl lysine isopeptide (Lys-Gly) (interchain with G-Cter in SUMO1); alternate cross-link involves residue K203. K203 is covalently cross-linked (Glycyl lysine isopeptide (Lys-Gly) (interchain with G-Cter in SUMO2); alternate). K213 is subject to N6-acetyllysine. Positions 242-265 (QSQISDTSVVLSMDNSRSLDMDGI) are linker 12. Residues S259 and S280 each carry the phosphoserine modification. The coil 2 stretch occupies residues 266-403 (IAEVRAQYED…ITTYRKLLEG (138 aa)). Positions 267-387 (AEVRAQYEDI…REYQELMNVK (121 aa)) are necessary for interaction with PNN. Residue K291 forms a Glycyl lysine isopeptide (Lys-Gly) (interchain with G-Cter in SUMO2) linkage. K301 is covalently cross-linked (Glycyl lysine isopeptide (Lys-Gly) (interchain with G-Cter in SUMO2); alternate). Position 301 is an N6-acetyllysine; alternate (K301). K310 participates in a covalent cross-link: Glycyl lysine isopeptide (Lys-Gly) (interchain with G-Cter in SUMO2). K331 participates in a covalent cross-link: Glycyl lysine isopeptide (Lys-Gly) (interchain with G-Cter in SUMO2); alternate. K331 is subject to N6-acetyllysine; alternate. S336 bears the Phosphoserine mark. A Glycyl lysine isopeptide (Lys-Gly) (interchain with G-Cter in SUMO2) cross-link involves residue K399. The tract at residues 404–490 (EESRLESGMQ…VSESSDVVSK (87 aa)) is tail. Residues S406, S410, S416, S423, S430, S432, and S438 each carry the phosphoserine modification. A Glycyl lysine isopeptide (Lys-Gly) (interchain with G-Cter in SUMO1); alternate cross-link involves residue K479. K479 participates in a covalent cross-link: Glycyl lysine isopeptide (Lys-Gly) (interchain with G-Cter in SUMO2); alternate. Phosphoserine occurs at positions 482, 484, 485, and 489.

This sequence belongs to the intermediate filament family. In terms of assembly, heterotetramer of two type I and two type II keratins. Forms a heterodimer with KRT18. Associates with KRT20. Interacts with PLEC isoform 1C, when in a heterodimer with KRT18. Interacts with PNN. When associated with KRT19, interacts with DMD. Interacts with TCHP. Interacts with APEX1. Interacts with GPER1. Interacts with EPPK1. Interacts with PKP1 and PKP2. Post-translationally, phosphorylation on serine residues is enhanced during EGF stimulation and mitosis. Ser-80 phosphorylation plays an important role in keratin filament reorganization. O-glycosylated. O-GlcNAcylation at multiple sites increases solubility, and decreases stability by inducing proteasomal degradation. In terms of processing, O-glycosylated (O-GlcNAcylated), in a cell cycle-dependent manner. As to expression, expressed in abundance in the epithelia of colon, bladder, ileum, and stomach, with lower expression observed in earskin (at protein level). Also expressed in pancreas, liver, dudenum and jejunum.

It is found in the cytoplasm. The protein localises to the nucleus. Its subcellular location is the nucleoplasm. It localises to the nucleus matrix. Functionally, together with KRT19, helps to link the contractile apparatus to dystrophin at the costameres of striated muscle. This chain is Keratin, type II cytoskeletal 8 (Krt8), found in Mus musculus (Mouse).